The primary structure comprises 80 residues: Ubiquitin-like protein NEDD8-like protein 2 (80 aa).

Belongs to the ubiquitin family.

This chain is Ubiquitin-like protein NEDD8-like protein 2 (nedd8l2), found in Dictyostelium discoideum (Social amoeba).